The primary structure comprises 336 residues: Formimidoylglutamase (336 aa).

Mn(2+) is bound by residues His-129, Asp-160, His-162, Asp-164, Asp-257, and Asp-259.

Belongs to the arginase family. Mn(2+) serves as cofactor.

The catalysed reaction is N-formimidoyl-L-glutamate + H2O = formamide + L-glutamate. The protein operates within amino-acid degradation; L-histidine degradation into L-glutamate; L-glutamate from N-formimidoyl-L-glutamate (hydrolase route): step 1/1. Functionally, catalyzes the conversion of N-formimidoyl-L-glutamate to L-glutamate and formamide. The sequence is that of Formimidoylglutamase from Vibrio vulnificus (strain YJ016).